Reading from the N-terminus, the 732-residue chain is Ubiquitin carboxyl-terminal hydrolase 21 (732 aa).

Residues 1–10 (MAEFSDPPPS) show a composition bias toward pro residues. Residues 1–111 (MAEFSDPPPS…ISPVSNNNHL (111 aa)) are disordered. Polar residues-rich tracts occupy residues 11-31 (NLSSSHKLTKPNQTLDESSPT) and 38-53 (VTNSLSLSSPIRQIQA). Positions 55–69 (SPAKPDGSSSSPPDK) are enriched in low complexity. Residues 163 to 469 (AGLYNSGNTC…PAYILFYARE (307 aa)) enclose the USP domain. The active-site Nucleophile is the cysteine 172. The Proton acceptor role is filled by histidine 428. A disordered region spans residues 534-732 (KEEVFHSAES…SSNMRRSIKL (199 aa)). Positions 540-551 (SAESSNNEDSSA) are enriched in low complexity. Basic and acidic residues predominate over residues 583 to 609 (AYIDKSEKPFAETSQPKEPKPFADRAS). Residues 719-732 (KKKKSSNMRRSIKL) show a composition bias toward basic residues.

The protein belongs to the peptidase C19 family.

The enzyme catalyses Thiol-dependent hydrolysis of ester, thioester, amide, peptide and isopeptide bonds formed by the C-terminal Gly of ubiquitin (a 76-residue protein attached to proteins as an intracellular targeting signal).. In terms of biological role, recognizes and hydrolyzes the peptide bond at the C-terminal Gly of ubiquitin. Involved in the processing of poly-ubiquitin precursors as well as that of ubiquitinated proteins. The polypeptide is Ubiquitin carboxyl-terminal hydrolase 21 (UBP21) (Arabidopsis thaliana (Mouse-ear cress)).